The chain runs to 249 residues: L-fucose operon activator (249 aa).

One can recognise an HTH deoR-type domain in the interval 1 to 56; the sequence is MNYRDELILQWVNQQGKASVIELAQHCDISVETIRRDLNKLANKGLLHRTHGGAVS. A DNA-binding region (H-T-H motif) is located at residues 18–37; sequence ASVIELAQHCDISVETIRRD.

Functionally, transcriptional activator of the fuc operon. This chain is L-fucose operon activator (fucR), found in Haemophilus influenzae (strain ATCC 51907 / DSM 11121 / KW20 / Rd).